The sequence spans 1052 residues: 3-hydroxy-3-methylglutaryl coenzyme A reductase mokG (1052 aa).

6 consecutive transmembrane segments (helical) span residues 223–243 (VDMA…VSLF), 253–273 (FWLA…GLGV), 279–299 (VPVD…TVGF), 349–369 (GWSI…GAVF), 378–398 (FCFL…TFYA), and 440–460 (WKLI…SSFF). An SSD domain is found at 224-403 (DMAIIGLGYL…FTFYATILCV (180 aa)). Residues 461–617 (YRIMGGFMTN…FKANQAESLT (157 aa)) form a linker region. The disordered stretch occupies residues 571 to 594 (APKESAAPAPPSSPASVPSAVPVP). A compositionally biased stretch (low complexity) spans 584-594 (PASVPSAVPVP). The segment at 618-1044 (DDELAELCLR…LVNAHMRHNR (427 aa)) is catalytic. Glu734 serves as the catalytic Charge relay system. The N-linked (GlcNAc...) asparagine glycan is linked to Asn798. Residues Lys867 and Asp943 each act as charge relay system in the active site. His1039 acts as the Proton donor in catalysis. Asn1043 carries an N-linked (GlcNAc...) asparagine glycan.

This sequence belongs to the HMG-CoA reductase family.

Its subcellular location is the endoplasmic reticulum membrane. It catalyses the reaction (R)-mevalonate + 2 NADP(+) + CoA = (3S)-3-hydroxy-3-methylglutaryl-CoA + 2 NADPH + 2 H(+). The protein operates within polyketide biosynthesis; lovastatin biosynthesis. HMG-CoA reductase; part of the gene cluster that mediates the biosynthesis of monakolin K, also known as lovastatin, and which acts as a potent competitive inhibitor of HMG-CoA reductase. Monakolin K biosynthesis is performed in two stages. The first stage is catalyzed by the nonaketide synthase mokA, which belongs to type I polyketide synthases and catalyzes the iterative nine-step formation of the polyketide. This PKS stage is completed by the action of dehydrogenase mokE, which catalyzes the NADPH-dependent reduction of the unsaturated tetra-, penta- and heptaketide intermediates that arise during the mokA-mediated biosynthesis of the nonaketide chain and leads to dihydromonacolin L. Covalently bound dihydromonacolin L is released from mokA by the mokD esterase. Conversion of dihydromonacolin L into monacolin L and then monacolin J is subsequently performed with the participation of molecular oxygen and P450 monoogygenase mokC. Finally, mokF performs the conversion of monacoline J to monacoline K through the addition of the side-chain diketide moiety (2R)-2-methylbutanoate produced by the diketide synthase mokB. HMG-CoA reductase mokG may act as a down-regulator of monacolin K production. This Monascus pilosus (Red mold) protein is 3-hydroxy-3-methylglutaryl coenzyme A reductase mokG.